Here is a 145-residue protein sequence, read N- to C-terminus: Cystatin-F (145 aa).

An N-terminal signal peptide occupies residues 1 to 19; sequence MRAAGTLLAFCCLVLSTTG. Asn62 is a glycosylation site (N-linked (GlcNAc...) asparagine). Positions 81–85 match the Secondary area of contact motif; it reads QIVKG. Cysteines 99 and 110 form a disulfide. Asn115 carries an N-linked (GlcNAc...) asparagine glycan. An intrachain disulfide couples Cys124 to Cys144.

The protein belongs to the cystatin family. In terms of assembly, homodimer; disulfide-linked. As to expression, primarily expressed in peripheral blood cells and spleen.

The protein localises to the secreted. The protein resides in the cytoplasm. Its function is as follows. Inhibits papain and cathepsin L but with affinities lower than other cystatins. May play a role in immune regulation through inhibition of a unique target in the hematopoietic system. This is Cystatin-F (CST7) from Homo sapiens (Human).